Here is a 1292-residue protein sequence, read N- to C-terminus: Sorbin and SH3 domain-containing protein 1 (1292 aa).

Disordered stretches follow at residues 1–29 (MSSE…ATAD), 73–158 (LRAS…AQPE), 214–275 (HLQR…SSPL), and 318–381 (REQQ…MDEV). The span at 74–89 (RASSSYRETPSSSPAS) shows a compositional bias: low complexity. Position 82 is a phosphothreonine (threonine 82). A phosphoserine mark is found at serine 86 and serine 89. The segment covering 93 to 102 (TRQHESKPGL) has biased composition (basic and acidic residues). A phosphoserine mark is found at glutamate 105, leucine 114, valine 137, serine 146, serine 242, and serine 259. Residues 114–128 (LSSSADANGNAQPSS) show a composition bias toward polar residues. Residues 240–252 (SFSPPPPLVPPAP) are compositionally biased toward pro residues. Over residues 266-275 (AVSSTDSSPL) the composition is skewed to polar residues. Phosphoserine is present on serine 341. Position 344 is a phosphothreonine (threonine 344). Phosphoserine is present on residues glutamate 346 and serine 350. Over residues 354–365 (AIEKRAKDDSRR) the composition is skewed to basic and acidic residues. The SoHo domain occupies 366 to 469 (VVKSTQDLSD…YSPRYSFSED (104 aa)). Residues serine 369, serine 374, and asparagine 387 each carry the phosphoserine modification. Residues 405-534 (LNRDTPEENP…TRKYRAEPKS (130 aa)) form a disordered region. A compositionally biased stretch (polar residues) spans 437 to 450 (YTPTYQFPASTPSP). Phosphoserine occurs at positions 452, 465, 469, 472, 478, and 481. Residues 510 to 534 (SSERNDWEPPDKKVDTRKYRAEPKS) show a composition bias toward basic and acidic residues. Tyrosine 536 carries the post-translational modification Phosphotyrosine; by ABL1. Phosphoserine is present on residues serine 556, asparagine 603, serine 609, and serine 640. Residues 628–650 (APSANVPQSSAISPTPEISSETP) are disordered. Tyrosine 654 carries the post-translational modification Phosphotyrosine; by ABL1. 2 positions are modified to phosphoserine: serine 665 and lysine 700. A disordered region spans residues 692 to 716 (PLQGLSGLKRPSSSASTKDSESPRH). Threonine 708 is subject to Phosphothreonine. Phosphoserine occurs at positions 713, 730, 735, and 765. Positions 793 to 852 (SEMRPARAKFDFKAQTLKELPLQKGDIVYIYKQIDQNWYEGEHHGRVGIFPRTYIELLPP) constitute an SH3 1 domain. The residue at position 862 (threonine 862) is a Phosphothreonine. The SH3 2 domain occupies 867-928 (LEYGEAIAKF…PITYVDVIKR (62 aa)). Valine 923 carries the phosphoserine modification. Phosphotyrosine is present on tyrosine 937. Positions 944–954 (SSPSRSATASP) are enriched in low complexity. Disordered regions lie at residues 944-976 (SSPS…SRRA), 1041-1064 (SDRP…TYSL), 1106-1150 (QLSD…KKSC), and 1162-1230 (TEQR…SQTS). Residues serine 945 and serine 953 each carry the phosphoserine modification. Polar residues predominate over residues 955–971 (QFSSHSKLITPAPSSLP). The span at 1106-1117 (QLSDAFSSQSKR) shows a compositional bias: polar residues. Residues 1119 to 1136 (PWREESGQYERKAERGAG) are compositionally biased toward basic and acidic residues. A compositionally biased stretch (polar residues) spans 1162–1172 (TEQRLSDLNTP). Basic and acidic residues predominate over residues 1192 to 1203 (QTERHRGGEQAG). Residues 1211 to 1230 (GSQQPQAQQRRVTPDRSQTS) are compositionally biased toward polar residues. At glutamine 1213 the chain carries Phosphoserine. An SH3 3 domain is found at 1231-1292 (QDLFSYQALY…PGNYVKPLYL (62 aa)). Phosphotyrosine; by ABL1 is present on tyrosine 1240.

As to quaternary structure, interacts (via third SH3 domain) with the Ten-1 ICD form of TENM1; the interaction induces the translocation of SORBS1 to the nucleus. Interacts with INSM1. Interacts with the long isoform of AFDN and with VCL. AFDN and VCL bind to SORBS1 in a competitive manner and do not form a ternary complex. Interacts with ABL1, CBL, CBLB and INPPL1/SHIP2 through the third SH3 domain. Interaction with ABL1 occurs only after insulin stimulation while this has no effect on the interaction with INPPL1. Interacts with the insulin receptor but dissociates from it following insulin stimulation. Also interacts with SCA7, PTK2/FAK1 and flotillin. Interacts (via SH3 domain 2) with PXN. O-glycosylated. Detected in skeletal muscle (at protein level). Widely expressed with highest levels in heart and skeletal muscle.

It is found in the cell junction. The protein localises to the adherens junction. The protein resides in the cell membrane. Its subcellular location is the cytoplasm. It localises to the cytoskeleton. It is found in the focal adhesion. The protein localises to the nucleus. The protein resides in the nucleus matrix. In terms of biological role, plays a role in tyrosine phosphorylation of CBL by linking CBL to the insulin receptor. Required for insulin-stimulated glucose transport. Involved in formation of actin stress fibers and focal adhesions. The sequence is that of Sorbin and SH3 domain-containing protein 1 from Homo sapiens (Human).